Consider the following 275-residue polypeptide: Phage-like element PBSX protein XkdF (275 aa).

The interval 247-275 (KARGASKQTADDTGGNTEQVKKSIWSGLL) is disordered.

To B.subtilis YqbD.

This chain is Phage-like element PBSX protein XkdF (xkdF), found in Bacillus subtilis (strain 168).